The chain runs to 160 residues: 6,7-dimethyl-8-ribityllumazine synthase (160 aa).

Residues F23, 61 to 63, and 85 to 87 contribute to the 5-amino-6-(D-ribitylamino)uracil site; these read SFE and AVI. 90–91 lines the (2S)-2-hydroxy-3-oxobutyl phosphate pocket; sequence DT. H93 functions as the Proton donor in the catalytic mechanism. F118 serves as a coordination point for 5-amino-6-(D-ribitylamino)uracil. R132 serves as a coordination point for (2S)-2-hydroxy-3-oxobutyl phosphate.

Belongs to the DMRL synthase family.

The catalysed reaction is (2S)-2-hydroxy-3-oxobutyl phosphate + 5-amino-6-(D-ribitylamino)uracil = 6,7-dimethyl-8-(1-D-ribityl)lumazine + phosphate + 2 H2O + H(+). Its pathway is cofactor biosynthesis; riboflavin biosynthesis; riboflavin from 2-hydroxy-3-oxobutyl phosphate and 5-amino-6-(D-ribitylamino)uracil: step 1/2. In terms of biological role, catalyzes the formation of 6,7-dimethyl-8-ribityllumazine by condensation of 5-amino-6-(D-ribitylamino)uracil with 3,4-dihydroxy-2-butanone 4-phosphate. This is the penultimate step in the biosynthesis of riboflavin. The protein is 6,7-dimethyl-8-ribityllumazine synthase of Synechococcus sp. (strain CC9311).